The primary structure comprises 120 residues: U13-lycotoxin-Ls1d (120 aa).

Residues 1–16 (MKILFVLISILYAVYC) form the signal peptide. The propeptide occupies 17–54 (FSSEEDVDSAYLANELEPVEDINSEQYAALEPKEEQER). Intrachain disulfides connect cysteine 56–cysteine 70, cysteine 63–cysteine 76, cysteine 69–cysteine 87, and cysteine 78–cysteine 85. An Agouti domain is found at 56 to 95 (CADMGQDCKDDCDCCLNIATCNCRFGRYFCSCTFGDYQTC).

It belongs to the neurotoxin 05 (agouti) family. Post-translationally, contains 6 disulfide bonds. In terms of tissue distribution, expressed by the venom gland.

It is found in the secreted. This Lycosa singoriensis (Wolf spider) protein is U13-lycotoxin-Ls1d.